We begin with the raw amino-acid sequence, 364 residues long: Protein-glutamate methylesterase/protein-glutamine glutaminase 3 (364 aa).

The Response regulatory domain maps to 7–124 (RVLIVDDSAS…THALLEASAR (118 aa)). A 4-aspartylphosphate modification is found at aspartate 58. The CheB-type methylesterase domain maps to 167-358 (PTTERLVCIG…REIMLWQDAK (192 aa)). Catalysis depends on residues serine 178, histidine 204, and aspartate 300.

The protein belongs to the CheB family. Phosphorylated by CheA. Phosphorylation of the N-terminal regulatory domain activates the methylesterase activity.

Its subcellular location is the cytoplasm. It carries out the reaction [protein]-L-glutamate 5-O-methyl ester + H2O = L-glutamyl-[protein] + methanol + H(+). It catalyses the reaction L-glutaminyl-[protein] + H2O = L-glutamyl-[protein] + NH4(+). Functionally, involved in chemotaxis. Part of a chemotaxis signal transduction system that modulates chemotaxis in response to various stimuli. Catalyzes the demethylation of specific methylglutamate residues introduced into the chemoreceptors (methyl-accepting chemotaxis proteins or MCP) by CheR. Also mediates the irreversible deamidation of specific glutamine residues to glutamic acid. In Rhodopseudomonas palustris (strain BisB18), this protein is Protein-glutamate methylesterase/protein-glutamine glutaminase 3.